Consider the following 399-residue polypeptide: Argininosuccinate synthase (399 aa).

Residues 10-18 and A38 each bind ATP; that span reads AYSGGVDTS. Y89 is an L-citrulline binding site. G119 contacts ATP. L-aspartate is bound by residues T121, N125, and D126. Residue N125 participates in L-citrulline binding. 5 residues coordinate L-citrulline: R129, S177, S186, E262, and Y274.

Belongs to the argininosuccinate synthase family. Type 1 subfamily. Homotetramer.

It localises to the cytoplasm. The enzyme catalyses L-citrulline + L-aspartate + ATP = 2-(N(omega)-L-arginino)succinate + AMP + diphosphate + H(+). Its pathway is amino-acid biosynthesis; L-arginine biosynthesis; L-arginine from L-ornithine and carbamoyl phosphate: step 2/3. This Rippkaea orientalis (strain PCC 8801 / RF-1) (Cyanothece sp. (strain PCC 8801)) protein is Argininosuccinate synthase.